The sequence spans 904 residues: MERAMEHLNVQLNRLTRSLRRARTVELPEDSETAVYTLMPMVMADQHRSVSELLLNSKFDVNYAFGRVKRSLLHIAANCGSVECLVLLLKRGANPNYQDISGCTPLHLAARNGQKKCMGRLLEYNADVNICNNEGLTAIHWLAVNGRTELLHDLVQHVTNVDVEDAMGQTALHVACQNGHKTTVQCLLDSGADINRPNVSGATPLYFACSHGQRDTAQILLLRGAKYLPDRNGVTPLDLCVQGGYGETCEILIQHHGRLFQTLIQMTQNDDIKENMLRQVLEHVSQQNDSNYQRILTSLAEVATTNGHKLLSLSSNFEVQTKSLLRIIRIFCHVFCLGPSSPNNGNDMGYNGNKTPRSQVFKPLELLWHSLDEWLVLISTELEKEITDTTRSSSGNDIASLFLKKQEVDHSVSSENPQLLLDASSVMKTPEVYADGQDVISMIANRLSAVIQAFYMCCSCQMPHGMTSPRFIEFVCKHDEVLKCFVTRNPKIIFNHFHFLLECPELMSRFMHIIKGQPFKDRCEWFYEHLLAGQPDSDMVHRPVNENDILLVHRDSLFRSSCEVVSKSSNEKLKQGIAVRFHGEEGMGQGVVREWFDILSNEIINPDYALFTQSADGTTFQPNSNSSVNPDHLNYFRFAGQILGLALYHRQLVNIYFTRSFYKHILGIPVSYQDVSSIDPEYAKNLQWILDNDISDLGLELTFSVETDVFGTMEEVPLKPGGTTIQVTQDNKEEYVQLVTELRMTRAIQPQINAFLQGFHTFIPPSLIQLFDEYELELLLSGMPEIDVMDWKRNTEYTSGYDLQEPVIQWFWEVVENLTQEERVLLLQFVTGSSRVPHGGFAFLMGGSGLQKFTVAAVPYTSNLLPTSSTCINMLKLPEYPSKDVLRDRLLVALHCGSYGYTMA.

ANK repeat units lie at residues 34 to 63 (AVYTLMPMVMADQHRSVSELLLNSKFDVNY), 68 to 97 (VKRSLLHIAANCGSVECLVLLLKRGANPNY), 101 to 130 (SGCTPLHLAARNGQKKCMGRLLEYNADVNI), 134 to 163 (EGLTAIHWLAVNGRTELLHDLVQHVTNVDV), 167 to 196 (MGQTALHVACQNGHKTTVQCLLDSGADINR), 200 to 230 (SGATPLYFACSHGQRDTAQILLLRGAKYLPD), and 232 to 261 (NGVTPLDLCVQGGYGETCEILIQHHGRLFQ). An HECT domain is found at 569 to 904 (SNEKLKQGIA…HCGSYGYTMA (336 aa)). Cys-871 acts as the Glycyl thioester intermediate in catalysis.

It localises to the golgi apparatus. It is found in the golgi stack membrane. The protein resides in the cytoplasm. Its subcellular location is the endoplasmic reticulum. The catalysed reaction is S-ubiquitinyl-[E2 ubiquitin-conjugating enzyme]-L-cysteine + [acceptor protein]-L-lysine = [E2 ubiquitin-conjugating enzyme]-L-cysteine + N(6)-ubiquitinyl-[acceptor protein]-L-lysine.. Its pathway is protein modification; protein ubiquitination. E3 ubiquitin-protein ligase involved in Golgi membrane fusion and regulation of small GTPases. Acts as a regulator of Golgi membrane dynamics during the cell cycle: recruited to Golgi membrane by Rab proteins and regulates postmitotic Golgi membrane fusion. Acts by mediating ubiquitination during mitotic Golgi disassembly, ubiquitination serving as a signal for Golgi reassembly later, after cell division. This is E3 ubiquitin-protein ligase HACE1 (hace1) from Danio rerio (Zebrafish).